Here is a 491-residue protein sequence, read N- to C-terminus: Cobyric acid synthase (491 aa).

A GATase cobBQ-type domain is found at 253 to 429; sequence ARRVAVIRLP…WHGALEGDEL (177 aa). Catalysis depends on C334, which acts as the Nucleophile. Residue H421 is part of the active site.

This sequence belongs to the CobB/CobQ family. CobQ subfamily.

Its pathway is cofactor biosynthesis; adenosylcobalamin biosynthesis. Catalyzes amidations at positions B, D, E, and G on adenosylcobyrinic A,C-diamide. NH(2) groups are provided by glutamine, and one molecule of ATP is hydrogenolyzed for each amidation. This is Cobyric acid synthase from Mycolicibacterium gilvum (strain PYR-GCK) (Mycobacterium gilvum (strain PYR-GCK)).